Here is a 193-residue protein sequence, read N- to C-terminus: Alpha-S2-casein (193 aa).

The first 15 residues, 1 to 15 (MKFFIFTCLLAVVLA), serve as a signal peptide directing secretion. 10 positions are modified to phosphoserine: Ser-23, Ser-24, Ser-25, Ser-28, Ser-47, Ser-68, Ser-123, Ser-125, Ser-128, and Ser-136.

It belongs to the alpha-casein family. Mammary gland specific. Secreted in milk.

Its subcellular location is the secreted. Important role in the capacity of milk to transport calcium phosphate. The sequence is that of Alpha-S2-casein (CSN1S2) from Camelus dromedarius (Dromedary).